The primary structure comprises 538 residues: DALR anticodon-binding domain-containing protein 3 (538 aa).

Part of a complex containing tRNA(Arg) and METTL2. Interacts with tRNA(Arg)(CCU) and tRNA(Arg)(UCU). Interacts with METTL2.

Involved in tRNA methylation. Facilitates the recognition and targeting of tRNA(Arg)(CCU) and tRNA(Arg)(UCU) substrates for N(3)-methylcytidine modification by METTL2. This is DALR anticodon-binding domain-containing protein 3 (Dalrd3) from Rattus norvegicus (Rat).